The primary structure comprises 450 residues: MLDNFIANQATKEFSVSEISNKIKELLENNFGYIKVKGEISGLKIASSGHAYFNLKENTAILACTCWRPILAKIKFPLNDGMEVVISGKLSSYAGNSRYQLSVDNLQPAGLGAMLQILNERKARLEKEGLFNKIRIPIPFLPDKIGVITSITGAVIKDIIHRIRERFPTRIIIWPVSVQGENSGNEIAEAIEGFNNLEEINKPSVIIVARGGGSIEDLWSFNDEILVRAAYNSKIPIISAVGHEVDYTLIDLAADKRAPTPTAAAEFAVPVRSILNNTLQSYEKILLNNTSRLIKYHEQNIINYDKIHRYLSHYMNNKQQLLDETGFNLLDALPCFIELQETKIKSFSKERVNPAKILNYKTLELTHQTAYLSKSANNTLKNFEYKLELNSTLLASLDYNNVLKRGFAIVKGETGNFLSSKITAANEKIFNIKFSDGEIKVVRNTVIASD.

Belongs to the XseA family. As to quaternary structure, heterooligomer composed of large and small subunits.

Its subcellular location is the cytoplasm. It catalyses the reaction Exonucleolytic cleavage in either 5'- to 3'- or 3'- to 5'-direction to yield nucleoside 5'-phosphates.. Bidirectionally degrades single-stranded DNA into large acid-insoluble oligonucleotides, which are then degraded further into small acid-soluble oligonucleotides. The protein is Exodeoxyribonuclease 7 large subunit of Rickettsia felis (strain ATCC VR-1525 / URRWXCal2) (Rickettsia azadi).